The sequence spans 197 residues: LexA repressor (197 aa).

A DNA-binding region (H-T-H motif) is located at residues 28-47 (VREIARRFRITPRGALLHLI). Residues Ser-119 and Lys-156 each act as for autocatalytic cleavage activity in the active site.

The protein belongs to the peptidase S24 family. Homodimer.

The catalysed reaction is Hydrolysis of Ala-|-Gly bond in repressor LexA.. Its function is as follows. Represses a number of genes involved in the response to DNA damage (SOS response), including recA and lexA. In the presence of single-stranded DNA, RecA interacts with LexA causing an autocatalytic cleavage which disrupts the DNA-binding part of LexA, leading to derepression of the SOS regulon and eventually DNA repair. The protein is LexA repressor of Thermotoga maritima (strain ATCC 43589 / DSM 3109 / JCM 10099 / NBRC 100826 / MSB8).